Reading from the N-terminus, the 321-residue chain is MKTINKITIAILTLSAAASVNAATTLKMGMQASVGSVEYNSAKMLADTLEEMSQGEIKLALYPSAQLGDDRAMLQQLTLGDLDITYAEFGRMGLWIPRAEAVMLPYVAKDFDHLRRMFESDFGQGVRDEMLQKFNWRALDTWYNGTRETTSNRPLNSIEDFKGLKLRVPNAKQNLNYAKLSGASPTPMSFSEVYLALQTNAVDGQENPLPTIKTMKFYEVQKNLAMTHHIVNDQMVIISESTWQKLSDTDKDIIQKAVQKVGDAHTQTVKTQEAELVSFFKSEGINVTYPDLEPFREAMQPLYKEFDSNIGQPIVSKLAAM.

The signal sequence occupies residues 1 to 22 (MKTINKITIAILTLSAAASVNA).

This sequence belongs to the bacterial solute-binding protein 7 family. In terms of assembly, the complex comprises the extracytoplasmic solute receptor protein SiaP, and the two transmembrane proteins SiaQ and SiaM.

The protein localises to the periplasm. Part of the tripartite ATP-independent periplasmic (TRAP) transport system SiaPQM that catalyzes unidirectional Na(+)-dependent sialic acid uptake. Binds the common sialic acid N-acetylneuraminic acid (Neu5Ac) with a high affinity. The chain is Sialic acid-binding periplasmic protein SiaP from Vibrio cholerae serotype O1 (strain ATCC 39315 / El Tor Inaba N16961).